The chain runs to 440 residues: Dihydrolipoyllysine-residue acetyltransferase component of pyruvate dehydrogenase complex (440 aa).

In terms of domain architecture, Lipoyl-binding spans 2-78; it reads SIEVKMPALS…AVGQVIAVMA (77 aa). Lys43 carries the post-translational modification N6-lipoyllysine. Residues 91-113 form a disordered region; the sequence is ASSQISEPSEKADVAQKETADSE. A compositionally biased stretch (basic and acidic residues) spans 98–110; sequence PSEKADVAQKETA. Residues 149-186 form the Peripheral subunit-binding (PSBD) domain; it reads KASPLAKRLAKKNHVDLKQVNGSGPHGRIIKADIEAFI. The span at 192–202 shows a compositional bias: polar residues; that stretch reads ASSNPSVSTPE. The interval 192-214 is disordered; it reads ASSNPSVSTPEASGKITHDTPHN. The active site involves His412.

It belongs to the 2-oxoacid dehydrogenase family. As to quaternary structure, forms a 24-polypeptide structural core with octahedral symmetry. (R)-lipoate serves as cofactor.

It catalyses the reaction N(6)-[(R)-dihydrolipoyl]-L-lysyl-[protein] + acetyl-CoA = N(6)-[(R)-S(8)-acetyldihydrolipoyl]-L-lysyl-[protein] + CoA. The pyruvate dehydrogenase complex catalyzes the overall conversion of pyruvate to acetyl-CoA and CO(2). It contains multiple copies of three enzymatic components: pyruvate dehydrogenase (E1), dihydrolipoamide acetyltransferase (E2) and lipoamide dehydrogenase (E3). The sequence is that of Dihydrolipoyllysine-residue acetyltransferase component of pyruvate dehydrogenase complex (pdhC) from Zymomonas mobilis subsp. mobilis (strain ATCC 31821 / ZM4 / CP4).